Consider the following 161-residue polypeptide: Protein lin-52 (161 aa).

Positions 137–161 (TGSASPRYLQPTPPKNVAEETTGSQ) are disordered.

Belongs to the lin-52 family. In terms of assembly, component of the DRM complex, at least composed of lin-9, lin-35, lin-37, lin-52, lin-53, lin-54- dpl-1 and efl-1. Interacts with zft-11; the interaction is required to suppress the activation of non-neuronal genes in neurons.

It is found in the nucleus. Synthetic multivulva class B (synMuvB) protein. SynMuvB proteins are required to repress the induction of vulval development by Ras signaling and probably act by forming the multiprotein DRM complex that represses transcription. In association with the zinc finger protein ztf-11, negatively regulates the expression of non-neuronal genes during neurogenesis. This is Protein lin-52 from Caenorhabditis elegans.